Reading from the N-terminus, the 271-residue chain is Probable L,D-transpeptidase 3 (271 aa).

Residues 127 to 270 (VVGVASISQH…VDIGDPVIVQ (144 aa)) enclose the L,D-TPase catalytic domain. Catalysis depends on H228, which acts as the Proton donor/acceptor. The active-site Nucleophile is the C246.

The protein operates within cell wall biogenesis; peptidoglycan biosynthesis. Its activity is regulated as follows. Is irreversibly inactivated by the beta-lactam carbapenems via the formation of a covalent adduct resulting from acylation of the catalytic Cys. Imipenem is the most efficient drug for in vitro LdtMt3/Rv1433 inactivation. In terms of biological role, probable L,D-transpeptidase that may perform as-yet-unknown cross-linking reactions in M.tuberculosis. Is not able to generate 3-&gt;3 cross-links in peptidoglycan, using tetrapeptide stems as acyl donor substrates. May function in the anchoring of proteins to peptidoglycan. The sequence is that of Probable L,D-transpeptidase 3 from Mycobacterium tuberculosis (strain ATCC 25618 / H37Rv).